We begin with the raw amino-acid sequence, 450 residues long: Glucose-6-phosphate isomerase (450 aa).

E290 serves as the catalytic Proton donor. Catalysis depends on residues H311 and K425.

Belongs to the GPI family.

It is found in the cytoplasm. It catalyses the reaction alpha-D-glucose 6-phosphate = beta-D-fructose 6-phosphate. It functions in the pathway carbohydrate biosynthesis; gluconeogenesis. The protein operates within carbohydrate degradation; glycolysis; D-glyceraldehyde 3-phosphate and glycerone phosphate from D-glucose: step 2/4. Functionally, catalyzes the reversible isomerization of glucose-6-phosphate to fructose-6-phosphate. This is Glucose-6-phosphate isomerase from Alkaliphilus metalliredigens (strain QYMF).